Consider the following 271-residue polypeptide: 3-methyl-2-oxobutanoate hydroxymethyltransferase (271 aa).

2 residues coordinate Mg(2+): D53 and D92. 3-methyl-2-oxobutanoate contacts are provided by residues 53-54 (DS), D92, and K120. Position 122 (E122) interacts with Mg(2+). The active-site Proton acceptor is E189.

Belongs to the PanB family. In terms of assembly, homodecamer; pentamer of dimers. The cofactor is Mg(2+).

The protein localises to the cytoplasm. It catalyses the reaction 3-methyl-2-oxobutanoate + (6R)-5,10-methylene-5,6,7,8-tetrahydrofolate + H2O = 2-dehydropantoate + (6S)-5,6,7,8-tetrahydrofolate. The protein operates within cofactor biosynthesis; (R)-pantothenate biosynthesis; (R)-pantoate from 3-methyl-2-oxobutanoate: step 1/2. Catalyzes the reversible reaction in which hydroxymethyl group from 5,10-methylenetetrahydrofolate is transferred onto alpha-ketoisovalerate to form ketopantoate. This chain is 3-methyl-2-oxobutanoate hydroxymethyltransferase, found in Burkholderia vietnamiensis (strain G4 / LMG 22486) (Burkholderia cepacia (strain R1808)).